The following is a 172-amino-acid chain: MTNQPYYETMYILRPTIPEDEVDSHLKKYTEILESAGGEVLDSQMRGKRRLAYPIGKHKEGIYVQLSHQGDGQHIAVLEKAMRLTEDVIRYLTVKQDGPLPAKRVVKTSEKNVKEDKEVENKETTTEDKDQKGDLKETKKSENKDSVTEAEGQKDIKEAKEIENKEIEKKED.

The interval Leu-100–Asp-172 is disordered. Positions Lys-107 to Asp-172 are enriched in basic and acidic residues.

The protein belongs to the bacterial ribosomal protein bS6 family.

Binds together with bS18 to 16S ribosomal RNA. The sequence is that of Small ribosomal subunit protein bS6 from Prochlorococcus marinus (strain MIT 9211).